The primary structure comprises 65 residues: Large ribosomal subunit protein uL30 (65 aa).

This sequence belongs to the universal ribosomal protein uL30 family. In terms of assembly, part of the 50S ribosomal subunit.

This chain is Large ribosomal subunit protein uL30, found in Onion yellows phytoplasma (strain OY-M).